Consider the following 301-residue polypeptide: MDIRHLTYFLEVARLKSFTKASQSLYVSQPTISKMIKNLEEELGIELFYRNGRQVELTDAGHSMYVQAQEIIKSFQNLTSELNDIMEVKKGHVRIGLPPMIGSGFFPRVLGDFRENYPNVTFQLVEDGSIKVQEGVGDGSLDIGVVVLPANEDIFHSFTIVKETLMLVVHPSHRLADEKECQLRELKDEPFIFFREDFVLHNRIMTECIKAGFRPHIIYETSQWDFISEMVSANLGIGLLPERICRGLDPEKVKVIPLVDPVIPWHLAIIWRKDRYLSFAARAWLEHTKSYLWDPKKDSKG.

The HTH lysR-type domain maps to 1–58; it reads MDIRHLTYFLEVARLKSFTKASQSLYVSQPTISKMIKNLEEELGIELFYRNGRQVELT. The H-T-H motif DNA-binding region spans 18–37; that stretch reads FTKASQSLYVSQPTISKMIK.

This sequence belongs to the LysR transcriptional regulatory family.

This is an uncharacterized protein from Bacillus subtilis (strain 168).